The sequence spans 675 residues: E3 ubiquitin-protein ligase COP1 (675 aa).

A disordered region spans residues 1–40 (MEEISTDPVVPAVKPDPRTSSVGEGANRHENDDGGSGGSE). Zn(2+) is bound by residues cysteine 52, cysteine 55, cysteine 67, histidine 69, cysteine 72, cysteine 75, cysteine 86, and cysteine 89. The RING-type zinc-finger motif lies at 52 to 90 (CPICMQIIKDAFLTACGHSFCYMCIITHLRNKSDCPCCS). Residues 67-177 (CGHSFCYMCI…LDFLHCLRKQ (111 aa)) form a CLS (cytoplasmic localization signal) region. An SNLS (subnuclear localization signal) region spans residues 120–177 (ASPLDQFREALQRGCDVSIKEVDNLLTLLAERKRKMEQEEAERNMQILLDFLHCLRKQ). A coiled-coil region spans residues 134 to 201 (CDVSIKEVDN…IKEDINAVER (68 aa)). The disordered stretch occupies residues 261–290 (EGKAQGSSHGLPKKDALSGSDSQSLNQSTV). Residues 279 to 290 (GSDSQSLNQSTV) show a composition bias toward polar residues. The Bipartite nuclear localization signal signature appears at 294-317 (RKKRIHAQFNDLQECYLQKRRQLA). WD repeat units lie at residues 369–408 (HSAN…NEPA), 418–458 (STRS…SLME), 461–501 (EHEK…SVIN), 503–543 (DMKA…QPLH), 547–585 (GHKK…PVRT), 588–627 (GHTN…PVTS), and 642–675 (AGSY…VLAA). The segment at 593-595 (KNF) is binding of human TRIB1 COP1-binding-motif.

Homodimer. Interacts with HY5, HYH, BBX24/STO, BBX25/STH, CIP8, COP10, SPA1, SPA2, SPA3, SPA4 and UVR8 and phosphorylated PHYA. Light induces dissociation of the SPA1/COP1 complex. Interacts with HRT/RPP8 and triggers it to the 26s proteasome. Binds to CRY2; this competitive interaction prevents triggering to proteasome of other binding proteins. Binds to SHW1 in the nucleus. Bonds to CIP7. Interacts with CSU2. Binds to CIP1. Interacts directly with DHU1. Associates to UNE10/PIF8. Binds directly to PCH1 and PCHL. Autoubiquitinated.

The protein localises to the nucleus. It is found in the cytoplasm. It carries out the reaction S-ubiquitinyl-[E2 ubiquitin-conjugating enzyme]-L-cysteine + [acceptor protein]-L-lysine = [E2 ubiquitin-conjugating enzyme]-L-cysteine + N(6)-ubiquitinyl-[acceptor protein]-L-lysine.. It functions in the pathway protein modification; protein ubiquitination. Its function is as follows. E3 ubiquitin-protein ligase that acts as a repressor of photomorphogenesis and as an activator of etiolation in darkness. E3 ubiquitin ligases accept ubiquitin from an E2 ubiquitin-conjugating enzyme in the form of a thioester and then directly transfers the ubiquitin to targeted substrates. Represses photomorphogenesis in darkness by mediating ubiquitination and subsequent proteasomal degradation of light-induced transcription factors such as HY5, HYH and LAF1. Down-regulates MYB21, probably via ubiquitination process. Light stimuli abrogate the repression of photomorphogenesis, possibly due to its localization to the cytoplasm. Could play a role in switching between skotomorphogenetic and photomorphogenetic pathways. Mediates the ubiquitination-dependent degradation of HY5 in the darkness during seedling development (e.g. hypocotyl growth). Represses CIP7 in darkness. Triggers ubiquitination and subsequent protein degradation of UNE10/PIF8, PCH1 and PCHL in the dark. The chain is E3 ubiquitin-protein ligase COP1 from Arabidopsis thaliana (Mouse-ear cress).